Consider the following 65-residue polypeptide: MPKMKTKKSASKRFTARPGGTIKRGQAFKRHILTKKTTKNKRQLRGTEGVHETNLKSVRAMMPYA.

Composition is skewed to basic residues over residues 1–15 (MPKMKTKKSASKRFT) and 26–44 (QAFKRHILTKKTTKNKRQL). Positions 1–65 (MPKMKTKKSA…KSVRAMMPYA (65 aa)) are disordered.

Belongs to the bacterial ribosomal protein bL35 family.

This is Large ribosomal subunit protein bL35 from Ralstonia nicotianae (strain ATCC BAA-1114 / GMI1000) (Ralstonia solanacearum).